A 74-amino-acid polypeptide reads, in one-letter code: ATP synthase subunit 9, mitochondrial (74 aa).

The next 2 helical transmembrane spans lie at 8 to 28 (MGAGAATIALAGAAIGIGNVF) and 50 to 70 (ILGFALTEAIALFALMMAFLI).

The protein belongs to the ATPase C chain family. F-type ATPases have 2 components, CF(1) - the catalytic core - and CF(0) - the membrane proton channel. CF(1) has five subunits: alpha(3), beta(3), gamma(1), delta(1), epsilon(1). CF(0) has three main subunits: a, b and c.

Its subcellular location is the mitochondrion membrane. This protein is one of the chains of the nonenzymatic membrane component (F0) of mitochondrial ATPase. The polypeptide is ATP synthase subunit 9, mitochondrial (ATP9) (Solanum lycopersicum (Tomato)).